A 132-amino-acid polypeptide reads, in one-letter code: UPF0299 membrane protein YohJ (132 aa).

The next 4 membrane-spanning stretches (helical) occupy residues 5-25 (LNIIWQYLRAFVLIYACLYAG), 26-46 (IFIASLLPVTIPGSIIGMLIL), 63-83 (GCYVLIRYMALLFVPIGVGVM), and 93-113 (FGPVVVSCAVSTLVVFLVVSW).

It belongs to the UPF0299 family.

Its subcellular location is the cell inner membrane. This is UPF0299 membrane protein YohJ from Shigella flexneri serotype 5b (strain 8401).